A 228-amino-acid polypeptide reads, in one-letter code: Ribosomal RNA large subunit methyltransferase E (228 aa).

Positions 76, 78, 99, 115, and 139 each coordinate S-adenosyl-L-methionine. The Proton acceptor role is filled by Lys-179.

The protein belongs to the class I-like SAM-binding methyltransferase superfamily. RNA methyltransferase RlmE family.

Its subcellular location is the cytoplasm. The enzyme catalyses uridine(2552) in 23S rRNA + S-adenosyl-L-methionine = 2'-O-methyluridine(2552) in 23S rRNA + S-adenosyl-L-homocysteine + H(+). Functionally, specifically methylates the uridine in position 2552 of 23S rRNA at the 2'-O position of the ribose in the fully assembled 50S ribosomal subunit. This chain is Ribosomal RNA large subunit methyltransferase E, found in Bradyrhizobium diazoefficiens (strain JCM 10833 / BCRC 13528 / IAM 13628 / NBRC 14792 / USDA 110).